Reading from the N-terminus, the 369-residue chain is Trans-enoyl reductase pyiC (369 aa).

52–55 contributes to the NADP(+) binding site; that stretch reads CDYK. Substrate is bound at residue 137–144; that stretch reads TGIGTLGM. Residues 195-198, Y213, and 260-261 contribute to the NADP(+) site; these read SPKN and LE. Residue 280 to 284 participates in substrate binding; that stretch reads GPLLL. Residue 349–350 participates in NADP(+) binding; the sequence is VS.

This sequence belongs to the zinc-containing alcohol dehydrogenase family. Monomer.

Its pathway is mycotoxin biosynthesis. Functionally, trans-enoyl reductase; part of the gene cluster that mediates the biosynthesis of the mycotoxin pyrichalasin H, a tyrosine-derived cytochalasan that inhibits the growth of rice seedlings, but also inhibits lymphocyte capping and actin polymerization and alters cell morphology. Pyrichalasin H is indicated as the responsible agent for the genus-specific pathogenicity of M.grisea toward crabgrass. The first step in the pathway is catalyzed by the O-methyltransferase pyiA which methylates free tyrosine to generate the precursor O-methyltyrosine. The hybrid PKS-NRPS pyiS, assisted by the enoyl reductase pyiC, are responsible for fusion of the O-methyltyrosine precursor and the polyketide backbone. The polyketide synthase module (PKS) of pyiS is responsible for the synthesis of the polyketide backbone and the downstream nonribosomal peptide synthetase (NRPS) amidates the carboxyl end of the polyketide with the O-methyltyrosine precursor. As the NRPS A-domain demonstrates substrate tolerance, pyiS can also use phenylalanine, tyrosine and even para-chlorophenylalanine as amino acid precursor, which leads to the production of novel cytochalasans, including halogenated cytochalasans. Because pyiS lacks a designated enoylreductase (ER) domain, the required activity is provided the enoyl reductase pyiC. Reduction by the hydrolyase pyiE, followed by dehydration and intra-molecular Diels-Alder cyclization by the Diels-Alderase pyiF then yield the required isoindolone-fused macrocycle. The tailoring cytochrome P450 monooxygenases piyD and piyG catalyze the hydroxylation at C-18 and C-7, respectivily, whereas the short-chain dehydrogenase/reductase pyiH reduces the carbonyl at C-21 in preparation for the transfer of an acetyl group by the acetyltransferase pyiB. These 3 reactions whose order is not clear yet, lead to the production of O-methylpyrichalasin J, a deacetylated pyrichalasin H. Finally, pyiB to converts O-methylpyrichalasin J into the final product pyrichalasin H via acetylation of C-21. The polypeptide is Trans-enoyl reductase pyiC (Pyricularia grisea (Crabgrass-specific blast fungus)).